The primary structure comprises 142 residues: Large ribosomal subunit protein uL11 (142 aa).

This sequence belongs to the universal ribosomal protein uL11 family. As to quaternary structure, part of the ribosomal stalk of the 50S ribosomal subunit. Interacts with L10 and the large rRNA to form the base of the stalk. L10 forms an elongated spine to which L12 dimers bind in a sequential fashion forming a multimeric L10(L12)X complex. In terms of processing, one or more lysine residues are methylated.

In terms of biological role, forms part of the ribosomal stalk which helps the ribosome interact with GTP-bound translation factors. This is Large ribosomal subunit protein uL11 from Vibrio vulnificus (strain CMCP6).